Reading from the N-terminus, the 1012-residue chain is DNA polymerase catalytic subunit (1012 aa).

This sequence belongs to the DNA polymerase type-B family.

It localises to the host nucleus. The enzyme catalyses DNA(n) + a 2'-deoxyribonucleoside 5'-triphosphate = DNA(n+1) + diphosphate. In terms of biological role, replicates viral genomic DNA. This chain is DNA polymerase catalytic subunit (U38), found in Human herpesvirus 6B (strain Z29) (HHV-6 variant B).